Here is a 249-residue protein sequence, read N- to C-terminus: Cytoplasmic envelopment protein 1 (249 aa).

It belongs to the herpesviridae cytoplasmic envelopment protein 1 family.

The protein localises to the virion. It localises to the virion tegument. It is found in the host cytoplasm. The protein resides in the host Golgi apparatus. Functionally, plays a critical role in cytoplasmic virus egress. Participates in the final step of tegumentation and envelope acquisition within the host cytoplasm. This chain is Cytoplasmic envelopment protein 1 (UL103), found in Homo sapiens (Human).